The following is a 225-amino-acid chain: MNGIRDVVKEEQPRERLLLEGAGSLSNRELLAVLLRTGSKEETVLKLSDKILHHFDGLRMLKDATLEELVSIHGVGVAKATQLIAAFELGRRMVRLEYQNRYSIRSPEDCATYMMEEMRFLQQEHFVCLYLNTKNQVIHRQTIFIGSLNSSIVHPREVFKEAFRRAAASIICLHNHPSGDPAPSREDIEVTKRLVECGRIIGIEVLDHIIIGDHKFVSLKEKGHI.

In terms of domain architecture, MPN spans 103–225 (SIRSPEDCAT…FVSLKEKGHI (123 aa)). Zn(2+) is bound by residues histidine 174, histidine 176, and aspartate 187. The JAMM motif signature appears at 174–187 (HNHPSGDPAPSRED).

Belongs to the UPF0758 family.

This chain is UPF0758 protein BCE_4545, found in Bacillus cereus (strain ATCC 10987 / NRS 248).